Consider the following 264-residue polypeptide: Cercarial protease (264 aa).

An N-terminal signal peptide occupies residues 1–19 (MSNRWRFVVVVTLFTYCLT). Positions 20–27 (FERVSTWL) are excised as a propeptide. A Peptidase S1 domain is found at 28–264 (IRSGEPVQHP…RMLDFVRSNI (237 aa)). Cys53 and Cys69 are joined by a disulfide. Catalysis depends on charge relay system residues His68 and Asp126. The cysteines at positions 192 and 202 are disulfide-linked. Ser218 acts as the Charge relay system in catalysis.

This sequence belongs to the peptidase S1 family. As to expression, acetabular (penetration) glands.

With respect to regulation, activated by an autocatalytic mechanism. This protease cleaves elastin and thus facilitates penetration of schistosome parasite larvae through elastin-rich tissue of the host. The polypeptide is Cercarial protease (Schistosoma mansoni (Blood fluke)).